Here is a 513-residue protein sequence, read N- to C-terminus: Histidine ammonia-lyase (513 aa).

A cross-link (5-imidazolinone (Ala-Gly)) is located at residues 144–146; sequence ASG. Residue Ser-145 is modified to 2,3-didehydroalanine (Ser).

The protein belongs to the PAL/histidase family. In terms of processing, contains an active site 4-methylidene-imidazol-5-one (MIO), which is formed autocatalytically by cyclization and dehydration of residues Ala-Ser-Gly.

It is found in the cytoplasm. The catalysed reaction is L-histidine = trans-urocanate + NH4(+). It functions in the pathway amino-acid degradation; L-histidine degradation into L-glutamate; N-formimidoyl-L-glutamate from L-histidine: step 1/3. This chain is Histidine ammonia-lyase, found in Streptococcus pyogenes serotype M5 (strain Manfredo).